A 526-amino-acid polypeptide reads, in one-letter code: Amine oxidase [flavin-containing] A (526 aa).

The residue at position 1 (M1) is an N-acetylmethionine. Residues M1–S497 are Cytoplasmic-facing. S383 is subject to Phosphoserine. At C406 the chain carries S-8alpha-FAD cysteine. Residues V498–L518 traverse the membrane as a helical; Anchor for type IV membrane protein segment. Topologically, residues Y519–C526 are mitochondrial intermembrane. Residues K520 to K522 form an interaction with membrane phospholipid headgroups region.

Belongs to the flavin monoamine oxidase family. As to quaternary structure, monomer, homo- or heterodimer (containing two subunits of similar size). Each subunit contains a covalently bound flavin. Enzymatically active as monomer. FAD serves as cofactor.

The protein localises to the mitochondrion outer membrane. It catalyses the reaction a secondary aliphatic amine + O2 + H2O = a primary amine + an aldehyde + H2O2. The catalysed reaction is a primary methyl amine + O2 + H2O = an aldehyde + H2O2 + NH4(+). It carries out the reaction (R)-adrenaline + O2 + H2O = (R)-3,4-dihydroxymandelaldehyde + methylamine + H2O2. The enzyme catalyses dopamine + O2 + H2O = 3,4-dihydroxyphenylacetaldehyde + H2O2 + NH4(+). It catalyses the reaction tyramine + O2 + H2O = (4-hydroxyphenyl)acetaldehyde + H2O2 + NH4(+). The catalysed reaction is (R)-noradrenaline + O2 + H2O = (R)-3,4-dihydroxymandelaldehyde + H2O2 + NH4(+). It carries out the reaction serotonin + O2 + H2O = (5-hydroxyindol-3-yl)acetaldehyde + H2O2 + NH4(+). The enzyme catalyses kynuramine + O2 + H2O = 3-(2-aminophenyl)-3-oxopropanal + H2O2 + NH4(+). It catalyses the reaction tryptamine + O2 + H2O = indole-3-acetaldehyde + H2O2 + NH4(+). The catalysed reaction is 2-phenylethylamine + O2 + H2O = 2-phenylacetaldehyde + H2O2 + NH4(+). Catalyzes the oxidative deamination of primary and some secondary amine such as neurotransmitters, with concomitant reduction of oxygen to hydrogen peroxide and has important functions in the metabolism of neuroactive and vasoactive amines in the central nervous system and peripheral tissues. Preferentially oxidizes serotonin. Also catalyzes the oxidative deamination of kynuramine to 3-(2-aminophenyl)-3-oxopropanal that can spontaneously condense to 4-hydroxyquinoline. This is Amine oxidase [flavin-containing] A from Rattus norvegicus (Rat).